The primary structure comprises 416 residues: E3 ubiquitin-protein ligase RNFT1 (416 aa).

Disordered regions lie at residues 1-50 (MKHR…MSLP) and 68-117 (DLSS…DSRE). The span at 7–19 (HERQSSTESKNLK) shows a compositional bias: basic and acidic residues. 2 stretches are compositionally biased toward polar residues: residues 20 to 45 (ETTQ…SPSA) and 68 to 80 (DLSS…VARS). The segment covering 81-100 (NSRRVRPSTHGRSPSRHGHT) has biased composition (basic residues). The next 6 membrane-spanning stretches (helical) occupy residues 146 to 166 (LVVQ…TFLY), 184 to 204 (LQCL…YYTF), 214 to 234 (VFMN…VVGI), 237 to 257 (FIGK…PSFV), 265 to 287 (YWYM…PVWF), and 302 to 322 (WHFG…IIFG). The interval 349 to 400 (CSEADGMCAICQAEFTKPIALICQHVFCEECISSWFNKEKTCPLCRTLISNH) is required for ubiquitin ligase activity and for protection against ER stress-induced cell death. The segment at 356–394 (CAICQAEFTKPIALICQHVFCEECISSWFNKEKTCPLCR) adopts an RING-type zinc-finger fold.

It is found in the endoplasmic reticulum membrane. The catalysed reaction is S-ubiquitinyl-[E2 ubiquitin-conjugating enzyme]-L-cysteine + [acceptor protein]-L-lysine = [E2 ubiquitin-conjugating enzyme]-L-cysteine + N(6)-ubiquitinyl-[acceptor protein]-L-lysine.. It participates in protein modification; protein ubiquitination. Its function is as follows. E3 ubiquitin-protein ligase that acts in the endoplasmic reticulum (ER)-associated degradation (ERAD) pathway, which targets misfolded proteins that accumulate in the endoplasmic reticulum (ER) for ubiquitination and subsequent proteasome-mediated degradation. Protects cells from ER stress-induced apoptosis. This chain is E3 ubiquitin-protein ligase RNFT1 (rnft1), found in Xenopus laevis (African clawed frog).